Here is a 124-residue protein sequence, read N- to C-terminus: Glycine cleavage system H protein (124 aa).

The region spanning 19 to 101 (VATVGITDHA…ESGAWFFRMT (83 aa)) is the Lipoyl-binding domain. K60 is modified (N6-lipoyllysine).

This sequence belongs to the GcvH family. As to quaternary structure, the glycine cleavage system is composed of four proteins: P, T, L and H. The cofactor is (R)-lipoate.

Functionally, the glycine cleavage system catalyzes the degradation of glycine. The H protein shuttles the methylamine group of glycine from the P protein to the T protein. The chain is Glycine cleavage system H protein from Acidiphilium cryptum (strain JF-5).